Reading from the N-terminus, the 316-residue chain is DDRGK domain-containing protein 1 (316 aa).

Over 1–3 (MVE) the chain is Lumenal. A helical membrane pass occupies residues 4–24 (LDYLFLGSVGFLTIALMLIIL). The Cytoplasmic segment spans residues 25–316 (RIIKLYFDEK…VEHVSELTAA (292 aa)). A disordered region spans residues 147 to 187 (LEQEKEKRLQKEREKQMEQEEEERKRKCREREEREKREEEE).

It belongs to the DDRGK1 family.

The protein localises to the endoplasmic reticulum membrane. Its function is as follows. Substrate adapter for ufmylation, the covalent attachment of the ubiquitin-like modifier UFM1 to substrate proteins. The polypeptide is DDRGK domain-containing protein 1 (Brugia malayi (Filarial nematode worm)).